We begin with the raw amino-acid sequence, 200 residues long: MEILSAEFVVSNTKVEKCPQDNLPEYAFIGRSNVGKSSLINMLAKRPKLAMTSSTPGKTLLINHFLINKEWYLVDLPGYGYASRGKKQVEKIQQIIEDYILEREQMTNLFVLIDCRLEPQKIDLEFMEWLGENGVPFSIIFTKADKLTNGKVKDNVNKYLKKLTEQWEELPPHFVSSSEKKTGRQEILDYIDSINRSLKA.

The EngB-type G domain maps to asparagine 22–serine 197. Residues glycine 30–serine 37, glycine 57–leucine 61, aspartate 75–glycine 78, threonine 142–aspartate 145, and histidine 173–serine 178 each bind GTP. Mg(2+) is bound by residues serine 37 and threonine 59.

This sequence belongs to the TRAFAC class TrmE-Era-EngA-EngB-Septin-like GTPase superfamily. EngB GTPase family. The cofactor is Mg(2+).

In terms of biological role, necessary for normal cell division and for the maintenance of normal septation. This Phocaeicola vulgatus (strain ATCC 8482 / DSM 1447 / JCM 5826 / CCUG 4940 / NBRC 14291 / NCTC 11154) (Bacteroides vulgatus) protein is Probable GTP-binding protein EngB.